A 1377-amino-acid polypeptide reads, in one-letter code: DNA-directed RNA polymerase subunit beta (1377 aa).

This sequence belongs to the RNA polymerase beta chain family. In terms of assembly, the RNAP catalytic core consists of 2 alpha, 1 beta, 1 beta' and 1 omega subunit. When a sigma factor is associated with the core the holoenzyme is formed, which can initiate transcription.

It carries out the reaction RNA(n) + a ribonucleoside 5'-triphosphate = RNA(n+1) + diphosphate. In terms of biological role, DNA-dependent RNA polymerase catalyzes the transcription of DNA into RNA using the four ribonucleoside triphosphates as substrates. This Orientia tsutsugamushi (strain Boryong) (Rickettsia tsutsugamushi) protein is DNA-directed RNA polymerase subunit beta.